Reading from the N-terminus, the 405-residue chain is Putative arsenical pump-driving ATPase (405 aa).

Gly8–Thr15 serves as a coordination point for ATP.

This sequence belongs to the arsA ATPase family.

The enzyme catalyses arsenite(in) + ATP + H2O = arsenite(out) + ADP + phosphate + H(+). Its function is as follows. Anion-transporting ATPase. Catalyzes the extrusion of arsenite. In Prosthecochloris vibrioformis (Chlorobium vibrioforme), this protein is Putative arsenical pump-driving ATPase.